We begin with the raw amino-acid sequence, 341 residues long: Glyceraldehyde-3-phosphate dehydrogenase 2 (341 aa).

Residues 12–13 (RI), Arg78, and Thr120 contribute to the NAD(+) site. Residues 152–154 (SCT) and Thr183 contribute to the D-glyceraldehyde 3-phosphate site. The active-site Nucleophile is the Cys153. NAD(+) is bound at residue Asn184. Residues Arg198, 211-212 (TG), and Arg234 contribute to the D-glyceraldehyde 3-phosphate site. An NAD(+)-binding site is contributed by Asn313.

Belongs to the glyceraldehyde-3-phosphate dehydrogenase family. In terms of assembly, homotetramer.

Its subcellular location is the cytoplasm. The catalysed reaction is D-glyceraldehyde 3-phosphate + phosphate + NAD(+) = (2R)-3-phospho-glyceroyl phosphate + NADH + H(+). Its pathway is carbohydrate degradation; glycolysis; pyruvate from D-glyceraldehyde 3-phosphate: step 1/5. Its function is as follows. Catalyzes the oxidative phosphorylation of glyceraldehyde 3-phosphate (G3P) to 1,3-bisphosphoglycerate (BPG) using the cofactor NAD. The first reaction step involves the formation of a hemiacetal intermediate between G3P and a cysteine residue, and this hemiacetal intermediate is then oxidized to a thioester, with concomitant reduction of NAD to NADH. The reduced NADH is then exchanged with the second NAD, and the thioester is attacked by a nucleophilic inorganic phosphate to produce BPG. The sequence is that of Glyceraldehyde-3-phosphate dehydrogenase 2 (gapA2) from Staphylococcus aureus (strain COL).